We begin with the raw amino-acid sequence, 234 residues long: Probable chemoreceptor glutamine deamidase CheD 1 (234 aa).

The tract at residues 183 to 234 (AREAAGPRGERAARARPRVELFGTPAPKAQATPRIELFGTRATQPATRKQEA) is disordered. Positions 190–201 (RGERAARARPRV) are enriched in basic and acidic residues. The segment covering 223 to 234 (RATQPATRKQEA) has biased composition (polar residues).

The protein belongs to the CheD family.

The catalysed reaction is L-glutaminyl-[protein] + H2O = L-glutamyl-[protein] + NH4(+). In terms of biological role, probably deamidates glutamine residues to glutamate on methyl-accepting chemotaxis receptors (MCPs), playing an important role in chemotaxis. The protein is Probable chemoreceptor glutamine deamidase CheD 1 of Burkholderia thailandensis (strain ATCC 700388 / DSM 13276 / CCUG 48851 / CIP 106301 / E264).